The chain runs to 370 residues: mRNA cap guanine-N(7) methyltransferase 1 (370 aa).

Over residues 1–11 the composition is skewed to low complexity; that stretch reads MKRGFSDSPSS. Residues 1–34 form a disordered region; the sequence is MKRGFSDSPSSSAPPPSSRFKSNPEGDSQFLEDE. The 281-residue stretch at 61–341 folds into the mRNA cap 0 methyltransferase domain; the sequence is SPIIHLKKLN…LYLSFVLRKR (281 aa). An mRNA-binding site is contributed by 70–71; sequence NN. Residues Lys74, Ala92, Asp114, 150-151, and 172-174 each bind S-adenosyl-L-methionine; these read DC and QFA.

It belongs to the class I-like SAM-binding methyltransferase superfamily. mRNA cap 0 methyltransferase family.

It localises to the nucleus. The catalysed reaction is a 5'-end (5'-triphosphoguanosine)-ribonucleoside in mRNA + S-adenosyl-L-methionine = a 5'-end (N(7)-methyl 5'-triphosphoguanosine)-ribonucleoside in mRNA + S-adenosyl-L-homocysteine. Its function is as follows. mRNA-capping methyltransferase that methylates the N7 position of the added guanosine to the 5'-cap structure of mRNAs. Binds RNA containing 5'-terminal GpppC. In Arabidopsis thaliana (Mouse-ear cress), this protein is mRNA cap guanine-N(7) methyltransferase 1.